Consider the following 433-residue polypeptide: Glutamate-1-semialdehyde 2,1-aminomutase (433 aa).

N6-(pyridoxal phosphate)lysine is present on Lys269.

This sequence belongs to the class-III pyridoxal-phosphate-dependent aminotransferase family. HemL subfamily. In terms of assembly, homodimer. It depends on pyridoxal 5'-phosphate as a cofactor.

The protein resides in the cytoplasm. It carries out the reaction (S)-4-amino-5-oxopentanoate = 5-aminolevulinate. Its pathway is porphyrin-containing compound metabolism; protoporphyrin-IX biosynthesis; 5-aminolevulinate from L-glutamyl-tRNA(Glu): step 2/2. The polypeptide is Glutamate-1-semialdehyde 2,1-aminomutase (Renibacterium salmoninarum (strain ATCC 33209 / DSM 20767 / JCM 11484 / NBRC 15589 / NCIMB 2235)).